Consider the following 439-residue polypeptide: Ribosomal protein uS12 methylthiotransferase RimO (439 aa).

In terms of domain architecture, MTTase N-terminal spans 5–116 (PTIAISHLGC…IVNVIERVEL (112 aa)). [4Fe-4S] cluster is bound by residues C14, C50, C79, C154, C158, and C161. A Radical SAM core domain is found at 140–369 (TTTEGVAYLR…MELQQPISQK (230 aa)). One can recognise a TRAM domain in the interval 372–438 (QQEVGKIVDV…TYDLYGQVVN (67 aa)).

The protein belongs to the methylthiotransferase family. RimO subfamily. [4Fe-4S] cluster is required as a cofactor.

It is found in the cytoplasm. The enzyme catalyses L-aspartate(89)-[ribosomal protein uS12]-hydrogen + (sulfur carrier)-SH + AH2 + 2 S-adenosyl-L-methionine = 3-methylsulfanyl-L-aspartate(89)-[ribosomal protein uS12]-hydrogen + (sulfur carrier)-H + 5'-deoxyadenosine + L-methionine + A + S-adenosyl-L-homocysteine + 2 H(+). In terms of biological role, catalyzes the methylthiolation of an aspartic acid residue of ribosomal protein uS12. The protein is Ribosomal protein uS12 methylthiotransferase RimO of Nostoc punctiforme (strain ATCC 29133 / PCC 73102).